The chain runs to 496 residues: Cytochrome c-552 (496 aa).

An N-terminal signal peptide occupies residues 1–23 (MKKYKFLFAISIIAIGLMTVLLA). Histidine 100 contacts heme c. The heme site is built by cysteine 128, cysteine 131, and lysine 132. Heme c contacts are provided by cysteine 166, cysteine 169, histidine 170, cysteine 210, cysteine 213, and histidine 214. Glutamate 216, tyrosine 217, lysine 269, and glutamine 271 together coordinate Ca(2+). Substrate is bound at residue tyrosine 217. Histidine 272 is a binding site for substrate. Residues histidine 283, cysteine 290, cysteine 293, histidine 294, histidine 308, cysteine 321, cysteine 324, histidine 325, and histidine 400 each coordinate heme c.

It belongs to the cytochrome c-552 family. Requires Ca(2+) as cofactor. The cofactor is heme c.

The protein resides in the periplasm. The catalysed reaction is 6 Fe(III)-[cytochrome c] + NH4(+) + 2 H2O = 6 Fe(II)-[cytochrome c] + nitrite + 8 H(+). Its pathway is nitrogen metabolism; nitrate reduction (assimilation). In terms of biological role, catalyzes the reduction of nitrite to ammonia, consuming six electrons in the process. This chain is Cytochrome c-552, found in Aliarcobacter butzleri (strain RM4018) (Arcobacter butzleri).